The chain runs to 269 residues: Energy-coupling factor transporter ATP-binding protein EcfA1 (269 aa).

The ABC transporter domain maps to 8–242 (IVFKNVSFQY…AEELTRIGLD (235 aa)). 42-49 (GHNGSGKS) is a binding site for ATP.

Belongs to the ABC transporter superfamily. Energy-coupling factor EcfA family. In terms of assembly, forms a stable energy-coupling factor (ECF) transporter complex composed of 2 membrane-embedded substrate-binding proteins (S component), 2 ATP-binding proteins (A component) and 2 transmembrane proteins (T component).

It localises to the cell membrane. Its function is as follows. ATP-binding (A) component of a common energy-coupling factor (ECF) ABC-transporter complex. Unlike classic ABC transporters this ECF transporter provides the energy necessary to transport a number of different substrates. This chain is Energy-coupling factor transporter ATP-binding protein EcfA1, found in Staphylococcus aureus (strain Mu50 / ATCC 700699).